A 210-amino-acid polypeptide reads, in one-letter code: Large ribosomal subunit protein uL3 (210 aa).

Residues Gly119 to Arg143 are disordered.

The protein belongs to the universal ribosomal protein uL3 family. In terms of assembly, part of the 50S ribosomal subunit. Forms a cluster with proteins L14 and L19.

Functionally, one of the primary rRNA binding proteins, it binds directly near the 3'-end of the 23S rRNA, where it nucleates assembly of the 50S subunit. The chain is Large ribosomal subunit protein uL3 from Lacticaseibacillus casei (strain BL23) (Lactobacillus casei).